A 215-amino-acid polypeptide reads, in one-letter code: 3-demethoxyubiquinol 3-hydroxylase (215 aa).

Residues Glu64, Glu94, His97, Glu146, Glu178, and His181 each contribute to the Fe cation site.

Belongs to the COQ7 family. Fe cation serves as cofactor.

The protein localises to the cell membrane. It catalyses the reaction a 5-methoxy-2-methyl-3-(all-trans-polyprenyl)benzene-1,4-diol + AH2 + O2 = a 3-demethylubiquinol + A + H2O. It functions in the pathway cofactor biosynthesis; ubiquinone biosynthesis. Functionally, catalyzes the hydroxylation of 2-nonaprenyl-3-methyl-6-methoxy-1,4-benzoquinol during ubiquinone biosynthesis. The sequence is that of 3-demethoxyubiquinol 3-hydroxylase from Ectopseudomonas mendocina (strain ymp) (Pseudomonas mendocina).